The chain runs to 763 residues: Heat shock 70 kDa protein 16 (763 aa).

Disordered stretches follow at residues 509-529 (ISEE…PSSG) and 701-763 (EKTT…MELD). Residue S528 is modified to Phosphoserine. A compositionally biased stretch (basic and acidic residues) spans 701-714 (EKTTEQESLPKDAN).

It belongs to the heat shock protein 70 (TC 1.A.33) family. HSP110/SSE subfamily.

The protein is Heat shock 70 kDa protein 16 (HSP70-16) of Arabidopsis thaliana (Mouse-ear cress).